The following is a 544-amino-acid chain: Phenylalanine--tRNA ligase beta subunit (544 aa).

The region spanning 270-346 (LEPKTRFLTK…KGYGYENIKV (77 aa)) is the B5 domain. 4 residues coordinate Mg(2+): aspartate 324, aspartate 330, glutamate 333, and aspartate 334.

Belongs to the phenylalanyl-tRNA synthetase beta subunit family. Type 2 subfamily. Tetramer of two alpha and two beta subunits. Mg(2+) is required as a cofactor.

It is found in the cytoplasm. It catalyses the reaction tRNA(Phe) + L-phenylalanine + ATP = L-phenylalanyl-tRNA(Phe) + AMP + diphosphate + H(+). The sequence is that of Phenylalanine--tRNA ligase beta subunit from Methanosarcina barkeri (strain Fusaro / DSM 804).